Consider the following 317-residue polypeptide: Protein IMPACT-B (317 aa).

An RWD domain is found at 17–118 (EEIEALSSIY…EKIREFLTEK (102 aa)). Residues 296 to 317 (DSTEETSKAGGKSKKPKSKKTK) form a disordered region. Residues 306–317 (GKSKKPKSKKTK) are compositionally biased toward basic residues.

The protein belongs to the IMPACT family. Interacts with GCN1; prevents the interaction of GCN1 with EIF2AK4/GCN2 and inhibits EIF2AK4/GCN2 kinase activity. Interaction with RPL39; this interaction occurs in a GCN1-independent manner. Associates with ribosomes; this interaction occurs in a GCN1-independent manner. Associates with actin; this interaction occurs in a GCN1-independent manner.

Its subcellular location is the cytoplasm. In terms of biological role, translational regulator that ensures constant high levels of translation upon a variety of stress conditions, such as amino acid starvation, UV-C irradiation, proteasome inhibitor treatment and glucose deprivation. Plays a role as a negative regulator of the EIF2AK4/GCN2 kinase activity; impairs GCN1-mediated EIF2AK4/GCN2 activation, and hence EIF2AK4/GCN2-mediated eIF-2-alpha phosphorylation and subsequent down-regulation of protein synthesis. Plays a role in differentiation of neuronal cells by stimulating neurite outgrowth. This Xenopus tropicalis (Western clawed frog) protein is Protein IMPACT-B (impact-B).